The primary structure comprises 132 residues: uncharacterized protein (132 aa).

This sequence to M.jannaschii MJ0661.

This is an uncharacterized protein from Helicobacter pylori (strain ATCC 700392 / 26695) (Campylobacter pylori).